A 361-amino-acid polypeptide reads, in one-letter code: 3-dehydroquinate synthase (361 aa).

This sequence belongs to the archaeal-type DHQ synthase family.

The enzyme catalyses 2-amino-2,3,7-trideoxy-D-lyxo-hept-6-ulosonate + NAD(+) + H2O = 3-dehydroquinate + NH4(+) + NADH + H(+). Its function is as follows. Catalyzes the oxidative deamination and cyclization of 2-amino-3,7-dideoxy-D-threo-hept-6-ulosonic acid (ADH) to yield 3-dehydroquinate (DHQ), which is fed into the canonical shikimic pathway of aromatic amino acid biosynthesis. This is 3-dehydroquinate synthase from Methanococcus maripaludis (strain C6 / ATCC BAA-1332).